Consider the following 722-residue polypeptide: Dual specificity tyrosine-phosphorylation-regulated kinase 2 (722 aa).

The residue at position 25 (serine 25) is a Phosphoserine. Residues 54-127 (TTTSLNGNGN…SGELKCNTPM (74 aa)) form a disordered region. A compositionally biased stretch (low complexity) spans 66–119 (GNSNSNNNNNIGSPVSSSTTNSSNGGNERGSSTKSNSSSGSGSSGNSASSTGSG). The Protein kinase domain occupies 198 to 494 (YEILEVIGKG…PDEAAHHEFL (297 aa)). ATP contacts are provided by residues 204–212 (IGKGSFGQV) and lysine 227. The Proton acceptor role is filled by aspartate 324. 2 positions are modified to phosphotyrosine; by autocatalysis: tyrosine 356 and tyrosine 358. Disordered regions lie at residues 494-519 (LQPSASSRHRSCRMSSSSSSSGLNSV), 557-582 (TTKSRQQPPSQSHGHAQSNGHLPDIK), 624-643 (GSGSTHHVSSAATRKHLPGT), and 679-722 (TTTH…FGRA). A compositionally biased stretch (low complexity) spans 506-519 (RMSSSSSSSGLNSV). Residues 557–576 (TTKSRQQPPSQSHGHAQSNG) are compositionally biased toward polar residues. Low complexity-rich tracts occupy residues 626–635 (GSTHHVSSAA) and 689–707 (GQQQQQSSSGASTMAMSHS).

Belongs to the protein kinase superfamily. CMGC Ser/Thr protein kinase family. MNB/DYRK subfamily. Mg(2+) serves as cofactor. In terms of processing, phosphorylated on serine/threonine residues.

The protein resides in the cytoplasm. The catalysed reaction is L-seryl-[protein] + ATP = O-phospho-L-seryl-[protein] + ADP + H(+). It catalyses the reaction L-threonyl-[protein] + ATP = O-phospho-L-threonyl-[protein] + ADP + H(+). It carries out the reaction L-tyrosyl-[protein] + ATP = O-phospho-L-tyrosyl-[protein] + ADP + H(+). Autophosphorylates on Tyr-356 and Tyr-358. Its function is as follows. In vitro; can phosphorylate exogenous substrates on Ser and Thr residues. May have a physiological role in development being involved in cellular growth and differentiation. The polypeptide is Dual specificity tyrosine-phosphorylation-regulated kinase 2 (Drosophila melanogaster (Fruit fly)).